The following is a 243-amino-acid chain: Carboxy-S-adenosyl-L-methionine synthase (243 aa).

Residues Y40, 65-67 (GSS), 90-91 (DN), 118-119 (DI), N133, and R200 each bind S-adenosyl-L-methionine.

Belongs to the class I-like SAM-binding methyltransferase superfamily. Cx-SAM synthase family. As to quaternary structure, homodimer.

The catalysed reaction is prephenate + S-adenosyl-L-methionine = carboxy-S-adenosyl-L-methionine + 3-phenylpyruvate + H2O. Its function is as follows. Catalyzes the conversion of S-adenosyl-L-methionine (SAM) to carboxy-S-adenosyl-L-methionine (Cx-SAM). This chain is Carboxy-S-adenosyl-L-methionine synthase, found in Shewanella denitrificans (strain OS217 / ATCC BAA-1090 / DSM 15013).